Here is a 125-residue protein sequence, read N- to C-terminus: Fluoride-specific ion channel FluC (125 aa).

The next 4 membrane-spanning stretches (helical) occupy residues 9–29 (LFCAGGGLTRYYLSGWIYGLL), 32–52 (AFPYGTLVVNIIGAYCIGLIM), 67–87 (IGLTVGFMGGLTTFSTFSYET), and 99–119 (AFTNVLASVAVCLLCTWLGII). 2 residues coordinate Na(+): G75 and T78.

This sequence belongs to the fluoride channel Fluc/FEX (TC 1.A.43) family.

Its subcellular location is the cell inner membrane. It catalyses the reaction fluoride(in) = fluoride(out). Na(+) is not transported, but it plays an essential structural role and its presence is essential for fluoride channel function. In terms of biological role, fluoride-specific ion channel. Important for reducing fluoride concentration in the cell, thus reducing its toxicity. This Trichlorobacter lovleyi (strain ATCC BAA-1151 / DSM 17278 / SZ) (Geobacter lovleyi) protein is Fluoride-specific ion channel FluC.